A 626-amino-acid polypeptide reads, in one-letter code: Chaperone protein HtpG (626 aa).

The segment at 1–339 (MSQNQETRGF…SNDLPLNVSR (339 aa)) is a; substrate-binding. The b stretch occupies residues 340–555 (EILQDNKITA…NDQMTTQMAK (216 aa)). The interval 556–626 (LFAAAGQPVP…FIKRINKLLG (71 aa)) is c.

Belongs to the heat shock protein 90 family. In terms of assembly, homodimer.

It localises to the cytoplasm. Molecular chaperone. Has ATPase activity. The sequence is that of Chaperone protein HtpG from Haemophilus influenzae (strain PittGG).